A 125-amino-acid chain; its full sequence is Small ribosomal subunit protein bS6 (125 aa).

It belongs to the bacterial ribosomal protein bS6 family.

Binds together with bS18 to 16S ribosomal RNA. This is Small ribosomal subunit protein bS6 from Baumannia cicadellinicola subsp. Homalodisca coagulata.